The chain runs to 527 residues: (3S)-3-amino-3-(3-chloro-4-hydroxyphenyl)propanoyl-[peptidyl-carrier protein SgcC2] monooxygenase (527 aa).

Over residues 1–10 the composition is skewed to basic and acidic residues; sequence MPHGAEREAS. Residues 1–22 are disordered; it reads MPHGAEREASPAEESAGTRPLT. Residues 161–163, 167–170, and threonine 202 contribute to the FAD site; these read HAF and PVDR.

The protein belongs to the FADH(2)-utilizing monooxygenase family. In terms of assembly, homotetramer.

It catalyses the reaction (3S)-3-amino-3-(3-chloro-4-hydroxyphenyl)propanoyl-[SgcC2 peptidyl-carrier protein] + FADH2 + O2 = (3S)-3-amino-3-(3-chloro-4,5-dihydroxyphenyl)propanoyl-[SgcC2 peptidyl-carrier protein] + FAD + H2O + H(+). It functions in the pathway antibiotic biosynthesis. With respect to regulation, the SgcE6-SgcC hydroxylation activity decreases in the presence of excess FAD. Its function is as follows. Oxygenase component of a two-component system involved in the biosynthesis of the enediyne antitumor antibiotic C-1027. Uses FADH(2) supplied by SgcE6 to catalyze the C-5 hydroxylation of (S)-3-chloro-beta-tyrosyl-S-SgcC2. Can also efficiently catalyze the regioselective hydroxylation of other 3-substituted beta-tyrosyl-S-SgcC2 analogs, including the bromo-, iodo-, fluoro-, and methyl-substituted analogs, but does not accept 3-hydroxy-beta-tyrosyl-S-SgcC2 as a substrate. Is only active with SgcC2 (peptidyl carrier protein)-tethered substrates. The chain is (3S)-3-amino-3-(3-chloro-4-hydroxyphenyl)propanoyl-[peptidyl-carrier protein SgcC2] monooxygenase from Streptomyces globisporus.